A 332-amino-acid polypeptide reads, in one-letter code: Beta-chimaerin (332 aa).

The segment at 78–128 (THNFKVHTFRGPHWCEYCANFMWGLIAQGVRCSDCGLNVHKQCSKHVPNDC) adopts a Phorbol-ester/DAG-type zinc-finger fold. Residues 141-332 (CDLTTLVKAH…ILIENEDVLF (192 aa)) enclose the Rho-GAP domain.

The protein localises to the membrane. In the inactive state, the N terminus protrudes into the active site of the Rho-GAP domain, sterically blocking Rac binding. Phospholipid binding to the Phorbol-ester/DAG-type zinc-finger/C1 domain triggers the cooperative dissociation of these interactions, allowing the N-terminus to move out of the active site and thereby activating the enzyme. Its function is as follows. GTPase-activating protein for p21-rac. The sequence is that of Beta-chimaerin (Chn2) from Mus musculus (Mouse).